Consider the following 311-residue polypeptide: Pyrimidine-specific ribonucleoside hydrolase RihA (311 aa).

Residue histidine 240 is part of the active site.

This sequence belongs to the IUNH family. RihA subfamily.

Its function is as follows. Hydrolyzes with equal efficiency cytidine or uridine to ribose and cytosine or uracil, respectively. The sequence is that of Pyrimidine-specific ribonucleoside hydrolase RihA from Escherichia coli (strain ATCC 8739 / DSM 1576 / NBRC 3972 / NCIMB 8545 / WDCM 00012 / Crooks).